A 508-amino-acid chain; its full sequence is Photosystem II CP47 reaction center protein (508 aa).

6 consecutive transmembrane segments (helical) span residues 21–36 (SVHI…WAGS), 101–115 (IVFS…IWHW), 140–156 (GIHL…FGAF), 203–218 (IAAG…FHLS), 237–252 (VLSS…AFVV), and 457–472 (SFAL…HGAR).

The protein belongs to the PsbB/PsbC family. PsbB subfamily. In terms of assembly, PSII is composed of 1 copy each of membrane proteins PsbA, PsbB, PsbC, PsbD, PsbE, PsbF, PsbH, PsbI, PsbJ, PsbK, PsbL, PsbM, PsbT, PsbX, PsbY, PsbZ, Psb30/Ycf12, at least 3 peripheral proteins of the oxygen-evolving complex and a large number of cofactors. It forms dimeric complexes. Binds multiple chlorophylls. PSII binds additional chlorophylls, carotenoids and specific lipids. serves as cofactor.

It is found in the plastid. The protein localises to the chloroplast thylakoid membrane. One of the components of the core complex of photosystem II (PSII). It binds chlorophyll and helps catalyze the primary light-induced photochemical processes of PSII. PSII is a light-driven water:plastoquinone oxidoreductase, using light energy to abstract electrons from H(2)O, generating O(2) and a proton gradient subsequently used for ATP formation. The protein is Photosystem II CP47 reaction center protein of Aethionema grandiflorum (Persian stone-cress).